The following is a 313-amino-acid chain: Testis-expressed protein 264 (313 aa).

The Lumenal portion of the chain corresponds to 1 to 6 (MSDLLL). The chain crosses the membrane as a helical; Signal-anchor for type III membrane protein span at residues 7-31 (LGLIGGLTLLLLLTLLAFAGYSGLL). Residues 32-313 (AGVEVSAGSP…EPTAPEKGKE (282 aa)) are Cytoplasmic-facing. The disordered stretch occupies residues 193 to 313 (PEMKETEWKW…EPTAPEKGKE (121 aa)). Positions 219–247 (DTMSDTSSVSLEVSPGSRETSAATLSPGA) are enriched in polar residues. 2 positions are modified to phosphoserine: Ser239 and Ser244. The span at 251 to 263 (GWDDGDTRSEHSY) shows a compositional bias: basic and acidic residues. The span at 264–273 (SESGASGSSF) shows a compositional bias: low complexity. The LIR motif signature appears at 273 to 276 (FEEL).

Interacts (via the LIR motif) with ATG8 family proteins MAP1LC3A, MAP1LC3B, GABARAP and GABARAPL1. Interacts with VCP/p97; bridging VCP/p97 to covalent DNA-protein cross-links (DPCs). Interacts with TOP1 (when sumoylated).

The protein localises to the endoplasmic reticulum membrane. It localises to the cytoplasmic vesicle. The protein resides in the autophagosome. Its subcellular location is the cytoplasm. It is found in the cytosol. The protein localises to the nucleus. It localises to the chromosome. Functionally, major reticulophagy (also called ER-phagy) receptor that acts independently of other candidate reticulophagy receptors to remodel subdomains of the endoplasmic reticulum into autophagosomes upon nutrient stress, which then fuse with lysosomes for endoplasmic reticulum turnover. The ATG8-containing isolation membrane (IM) cradles a tubular segment of TEX264-positive ER near a three-way junction, allowing the formation of a synapse of 2 juxtaposed membranes with trans interaction between the TEX264 and ATG8 proteins. Expansion of the IM would extend the capture of ER, possibly through a 'zipper-like' process involving continued trans TEX264-ATG8 interactions, until poorly understood mechanisms lead to the fission of relevant membranes and, ultimately, autophagosomal membrane closure. Also involved in the repair of covalent DNA-protein cross-links (DPCs) during DNA synthesis: acts by bridging VCP/p97 to covalent DNA-protein cross-links (DPCs) and initiating resolution of DPCs by SPRTN. This Homo sapiens (Human) protein is Testis-expressed protein 264.